A 228-amino-acid polypeptide reads, in one-letter code: Biosynthetic peptidoglycan transglycosylase (228 aa).

Residues 8–28 (ILAALVAAFLLYNLWVLGHII) form a helical membrane-spanning segment.

Belongs to the glycosyltransferase 51 family.

It is found in the cell inner membrane. It carries out the reaction [GlcNAc-(1-&gt;4)-Mur2Ac(oyl-L-Ala-gamma-D-Glu-L-Lys-D-Ala-D-Ala)](n)-di-trans,octa-cis-undecaprenyl diphosphate + beta-D-GlcNAc-(1-&gt;4)-Mur2Ac(oyl-L-Ala-gamma-D-Glu-L-Lys-D-Ala-D-Ala)-di-trans,octa-cis-undecaprenyl diphosphate = [GlcNAc-(1-&gt;4)-Mur2Ac(oyl-L-Ala-gamma-D-Glu-L-Lys-D-Ala-D-Ala)](n+1)-di-trans,octa-cis-undecaprenyl diphosphate + di-trans,octa-cis-undecaprenyl diphosphate + H(+). It participates in cell wall biogenesis; peptidoglycan biosynthesis. Its function is as follows. Peptidoglycan polymerase that catalyzes glycan chain elongation from lipid-linked precursors. The protein is Biosynthetic peptidoglycan transglycosylase of Chromobacterium violaceum (strain ATCC 12472 / DSM 30191 / JCM 1249 / CCUG 213 / NBRC 12614 / NCIMB 9131 / NCTC 9757 / MK).